Here is a 215-residue protein sequence, read N- to C-terminus: E3 ubiquitin-protein ligase NleG (215 aa).

The tract at residues 136-189 (CPITLCIPETGVFVRNAKNSEICSLYDHNALTELIRRNAPHPLSREPFVPEMIV) is RING/U-box domain. Residues 213–215 (TRI) carry the PDZ-binding motif motif.

The protein belongs to the NleG E3 ligase family. Interacts with host GOPC (human protein). In terms of processing, two sizes of protein are detected upon expression in C.rodentium; only the smaller protein is secreted.

The protein resides in the secreted. Its subcellular location is the host cytoplasm. The enzyme catalyses S-ubiquitinyl-[E2 ubiquitin-conjugating enzyme]-L-cysteine + [acceptor protein]-L-lysine = [E2 ubiquitin-conjugating enzyme]-L-cysteine + N(6)-ubiquitinyl-[acceptor protein]-L-lysine.. In terms of biological role, effector proteins function to alter host cell physiology and promote bacterial survival in host tissues. This protein is an E3 ubiquitin-protein ligase that probably interferes with the host's ubiquitination pathway and targets host proteins for proteasomal degradation. Can ubiquitinate ubiquitin, giving rise to polyubiquitin chains (in vitro). Does not complement an nleG8 deletion in C.rodentium. The polypeptide is E3 ubiquitin-protein ligase NleG (Escherichia coli O157:H7).